Reading from the N-terminus, the 570-residue chain is Probable electron transfer flavoprotein-ubiquinone oxidoreductase (570 aa).

13–27 (VVIVGAGPAGLSAAI) contributes to the FAD binding site. The [4Fe-4S] cluster site is built by cysteine 515, cysteine 539, cysteine 542, and cysteine 545. The region spanning 530-559 (KRFQINAANCVHCKTCDIKDPSQNITWVTP) is the 4Fe-4S ferredoxin-type domain.

[4Fe-4S] cluster is required as a cofactor. It depends on FAD as a cofactor.

It carries out the reaction a ubiquinone + reduced [electron-transfer flavoprotein] = a ubiquinol + oxidized [electron-transfer flavoprotein] + H(+). Its function is as follows. Accepts electrons from ETF and reduces ubiquinone. This Acinetobacter baylyi (strain ATCC 33305 / BD413 / ADP1) protein is Probable electron transfer flavoprotein-ubiquinone oxidoreductase (etfD).